The chain runs to 369 residues: Cobalt-precorrin-5B C(1)-methyltransferase (369 aa).

Belongs to the CbiD family.

The enzyme catalyses Co-precorrin-5B + S-adenosyl-L-methionine = Co-precorrin-6A + S-adenosyl-L-homocysteine. Its pathway is cofactor biosynthesis; adenosylcobalamin biosynthesis; cob(II)yrinate a,c-diamide from sirohydrochlorin (anaerobic route): step 6/10. In terms of biological role, catalyzes the methylation of C-1 in cobalt-precorrin-5B to form cobalt-precorrin-6A. This is Cobalt-precorrin-5B C(1)-methyltransferase from Prosthecochloris aestuarii (strain DSM 271 / SK 413).